A 424-amino-acid chain; its full sequence is Arogenate dehydratase 1 (424 aa).

The transit peptide at 1–52 (MQSLTPSSGVNLKSIIRKTSLPPGQTRFITGRVIKCGYQVDSANTVNTAGAP) directs the protein to the chloroplast. The Prephenate dehydratase domain maps to 131–308 (RVAYQGVPGA…NVTRFVMLAR (178 aa)). Residues 321 to 412 (TSIVFAHEGT…SFLRVLGSYP (92 aa)) form the ACT domain.

Mostly expressed in flowers, especially in petals (corollas and tubes), and, at low levels, in roots, stems, leaves, pistils, stamens, ovaries and sepals.

It localises to the plastid. The protein localises to the chloroplast stroma. The enzyme catalyses L-arogenate + H(+) = L-phenylalanine + CO2 + H2O. It participates in amino-acid biosynthesis; L-phenylalanine biosynthesis; L-phenylalanine from L-arogenate: step 1/1. Converts L-arogenate produced from the shikimate-chorismate pathway into phenylalanine (Phe). Involved in floral volatile benzenoids and phenylpropanoids (FVBP) production. The polypeptide is Arogenate dehydratase 1 (Petunia hybrida (Petunia)).